Consider the following 125-residue polypeptide: Photoactive yellow protein (125 aa).

One can recognise a PAS domain in the interval 23-86; sequence LNQLAFGAIQ…GRFKEGVANG (64 aa). At Cys69 the chain carries S-(4-hydroxycinnamyl)cysteine.

This sequence belongs to the photoactive yellow protein family. The 4-hydroxycinnamic acid (p-coumaric acid) chromophore is covalently bound via a thioester linkage.

Functionally, photoactive blue light protein. Probably functions as a photoreceptor for a negative phototaxis response. The sequence is that of Photoactive yellow protein (pyp) from Halochromatium salexigens (Chromatium salexigens).